Consider the following 396-residue polypeptide: MPLNSSMECKNYDYDYDSYQPYFYFDNEDEDFYNHQHGQPPAPSEDIWKKFELLPTPPLSPSRRPSLSDPFPSTADKLEMVSEFLGDDVVNHSIICDADYSQSFLKSIIIQDCMWSGFSAAAKLEKVVSERLASLQAARKESSRTESADICRSVGFLQDMSTPASQCIDPSVVFPFPLTDSTKPCKPAPTPASTTLPLDTPPNSGSSSSSSDSESDDEDDEDEEEEEEIDVVTVEKRKSVKKSDANATHQSPVVLKRCHVNIHQHNYAAHPSTRNEQPAVKRIKFESHIRVFKQISHNRKCASPRTSDSEDNDKRRTHNVLERQRRNELKLSFFALRDVIPDVANNEKAAKVVILKKATECIASMQEDEQRLISLKEQLRRKCEHLKQRLEQLSCS.

The O-linked (GlcNAc) threonine glycan is linked to threonine 56. Positions 79–87 match the 9aaTAD motif; sequence EMVSEFLGD. 2 disordered regions span residues 183–251 and 298–318; these read KPCK…THQS and NRKCASPRTSDSEDNDKRRTH. Low complexity predominate over residues 191-212; it reads PASTTLPLDTPPNSGSSSSSSD. Acidic residues predominate over residues 213 to 230; the sequence is SESDDEDDEDEEEEEEID. Positions 233–244 are enriched in basic and acidic residues; the sequence is TVEKRKSVKKSD. The bHLH domain maps to 313 to 365; the sequence is DKRRTHNVLERQRRNELKLSFFALRDVIPDVANNEKAAKVVILKKATECIASM. Residues 372–393 are leucine-zipper; that stretch reads LISLKEQLRRKCEHLKQRLEQL.

Efficient DNA binding requires dimerization with another bHLH protein. Binds DNA as a heterodimer with max.

The protein localises to the nucleus. In terms of biological role, transcription factor that binds DNA in a non-specific manner, yet also specifically recognizes the core sequence 5'-CAC[GA]TG-3'. Activates the transcription of growth-related genes. This chain is Transcriptional regulator Myc-B, found in Danio rerio (Zebrafish).